The following is a 43-amino-acid chain: Protein PsbN (43 aa).

Residues 5–27 (TFITIFISCLLVSVTGYALYTAF) traverse the membrane as a helical segment.

This sequence belongs to the PsbN family.

It is found in the plastid. The protein resides in the chloroplast thylakoid membrane. Its function is as follows. May play a role in photosystem I and II biogenesis. In Chara vulgaris (Common stonewort), this protein is Protein PsbN.